Here is a 352-residue protein sequence, read N- to C-terminus: Molybdenum import ATP-binding protein ModC (352 aa).

Residues 2–230 (MLEINVKKRL…PLFEPWQEQG (229 aa)) form the ABC transporter domain. 32–39 (GISGSGKS) contributes to the ATP binding site. Residues 290–352 (KTSIRNILSG…YAQIKAVSVM (63 aa)) form the Mop domain.

It belongs to the ABC transporter superfamily. Molybdate importer (TC 3.A.1.8) family. As to quaternary structure, the complex is composed of two ATP-binding proteins (ModC), two transmembrane proteins (ModB) and a solute-binding protein (ModA).

It localises to the cell inner membrane. It carries out the reaction molybdate(out) + ATP + H2O = molybdate(in) + ADP + phosphate + H(+). Part of the ABC transporter complex ModABC involved in molybdenum import. Responsible for energy coupling to the transport system. In Mannheimia succiniciproducens (strain KCTC 0769BP / MBEL55E), this protein is Molybdenum import ATP-binding protein ModC.